The following is a 66-amino-acid chain: Toxin Boma6c (66 aa).

The region spanning 2-64 (RDAYIAQNYN…VPIRIPGKCH (63 aa)) is the LCN-type CS-alpha/beta domain. 4 disulfide bridges follow: cysteine 12–cysteine 63, cysteine 16–cysteine 36, cysteine 22–cysteine 46, and cysteine 26–cysteine 48.

It belongs to the long (4 C-C) scorpion toxin superfamily. Sodium channel inhibitor family. Alpha subfamily. Expressed by the venom gland.

It localises to the secreted. Alpha toxins bind voltage-independently at site-3 of sodium channels (Nav) and inhibit the inactivation of the activated channels, thereby blocking neuronal transmission. The sequence is that of Toxin Boma6c from Buthus occitanus mardochei (Moroccan scorpion).